The primary structure comprises 402 residues: MTTKQVTCRYFLHGVCREGNHCQFSHDPSSSKPSTICKFYQRGTCAYGERCRYDHVKLSSRGGGAFDMAGVGGARDGASTRGAAKKTFVHQERENMFRAPAESFGADVMAPAPHTYVDAIRTGLSSSSQDHTPPTMAGVNQDLPRLCPYAAVGHCYYEENCIYLHGDKCEVCGLQVLDPHNPEQRSMHEKMCLLAFEADMEKAFAVQLSQEKVCSICMEVVVQKMNPSDRRFGILSSCCHVFCLACIRKWRCTRNFSNKIIKSCPECRVASEFVIPSVYWEENQEDKVHLIELFKSGVGKKPCKYFDQGRGSCPFGGKCLYLHALPDGSRAEPEQPRKQLGSEGNIRFMNSVRLWDFIEEREQHSAPPLQAFADDISELRELFVQMSGPSPDEGESQSRSAP.

3 consecutive C3H1-type zinc fingers follow at residues 2–29 (TTKQVTCRYFLHGVCREGNHCQFSHDPS), 31–58 (SKPSTICKFYQRGTCAYGERCRYDHVKL), and 141–168 (QDLPRLCPYAAVGHCYYEENCIYLHGDK). Positions 169–198 (CEVCGLQVLDPHNPEQRSMHEKMCLLAFEA) are makorin-type Cys-His. The segment at 214–268 (CSICMEVVVQKMNPSDRRFGILSSCCHVFCLACIRKWRCTRNFSNKIIKSCPECR) adopts an RING-type zinc-finger fold. The C3H1-type 4 zinc-finger motif lies at 297–326 (GVGKKPCKYFDQGRGSCPFGGKCLYLHALP).

It localises to the cytoplasm. Its subcellular location is the nucleus. It catalyses the reaction S-ubiquitinyl-[E2 ubiquitin-conjugating enzyme]-L-cysteine + [acceptor protein]-L-lysine = [E2 ubiquitin-conjugating enzyme]-L-cysteine + N(6)-ubiquitinyl-[acceptor protein]-L-lysine.. Its pathway is protein modification; protein ubiquitination. E3 ubiquitin ligase catalyzing the covalent attachment of ubiquitin moieties onto substrate proteins. Inhibits neurogenesis and axis formation during embryonic development by modulating the phosphatidylinositol 3-kinase (PI3K) pathway. Acts downstream of PI3K and akt1 to up-regulate gsk3b mRNA expression. This chain is E3 ubiquitin-protein ligase makorin-2, found in Takifugu rubripes (Japanese pufferfish).